The chain runs to 297 residues: NAC domain-containing protein 72 (297 aa).

Residues 14–162 (LPPGFRFYPT…DWVLCRIYKK (149 aa)) form the NAC domain. Residues 111-168 (VGIKKALVFYAGKAPKGTKTNWIMHEYRLIEHSRSHGSSKLDDWVLCRIYKKTSGSQR) mediate DNA binding. 2 disordered regions span residues 168–195 (RQAV…SQLD) and 259–278 (GEAE…LTQS). A compositionally biased stretch (polar residues) spans 266 to 277 (VNRQQNSSGLTQ).

Expressed in leaves and in root pericycle and epidermis.

The protein resides in the nucleus. Transcription factors that bind specifically to the 5'-CATGTG-3' motif and with bipartite regions with 5'-CGTr-3' and 5'-YACG-3' as cores. Involved in the regulation of metabolic reprogramming during senescence by promoting the chloroplast protein degradation and the catabolism of lysine, phytol and free fatty acids via the induction of CV, LKR/SDH and PES1 expression. Also triggers the degradation of starch and the accumulation of mono- and disaccharides during senescence by enhancing the expression of AMY1, SFP1 and SWEET15. The sequence is that of NAC domain-containing protein 72 from Arabidopsis thaliana (Mouse-ear cress).